The chain runs to 161 residues: Ethylene-responsive transcription factor ERF070 (161 aa).

Residues 1–35 (MKRIIRISFTDAEATDSSSDEDTEERGGASQTRRR) form a disordered region. The segment at residues 78-140 (KYRGVRQRPW…IGPHAPTNFG (63 aa)) is a DNA-binding region (AP2/ERF).

The protein belongs to the AP2/ERF transcription factor family. ERF subfamily.

The protein resides in the nucleus. Probably acts as a transcriptional activator. Binds to the GCC-box pathogenesis-related promoter element. May be involved in the regulation of gene expression by stress factors and by components of stress signal transduction pathways. The chain is Ethylene-responsive transcription factor ERF070 (ERF070) from Arabidopsis thaliana (Mouse-ear cress).